Reading from the N-terminus, the 37-residue chain is Large ribosomal subunit protein bL36 (37 aa).

Belongs to the bacterial ribosomal protein bL36 family.

This is Large ribosomal subunit protein bL36 from Halalkalibacterium halodurans (strain ATCC BAA-125 / DSM 18197 / FERM 7344 / JCM 9153 / C-125) (Bacillus halodurans).